A 313-amino-acid polypeptide reads, in one-letter code: Biotin synthase (313 aa).

The region spanning 28–258 is the Radical SAM core domain; the sequence is NFGNDIELCS…LFPQARLRLS (231 aa). Cys-46, Cys-50, and Cys-53 together coordinate [4Fe-4S] cluster. 4 residues coordinate [2Fe-2S] cluster: Cys-90, Cys-121, Cys-181, and Arg-256.

Belongs to the radical SAM superfamily. Biotin synthase family. As to quaternary structure, homodimer. It depends on [4Fe-4S] cluster as a cofactor. [2Fe-2S] cluster serves as cofactor.

It carries out the reaction (4R,5S)-dethiobiotin + (sulfur carrier)-SH + 2 reduced [2Fe-2S]-[ferredoxin] + 2 S-adenosyl-L-methionine = (sulfur carrier)-H + biotin + 2 5'-deoxyadenosine + 2 L-methionine + 2 oxidized [2Fe-2S]-[ferredoxin]. It functions in the pathway cofactor biosynthesis; biotin biosynthesis; biotin from 7,8-diaminononanoate: step 2/2. Its function is as follows. Catalyzes the conversion of dethiobiotin (DTB) to biotin by the insertion of a sulfur atom into dethiobiotin via a radical-based mechanism. This chain is Biotin synthase, found in Francisella tularensis subsp. tularensis (strain FSC 198).